Reading from the N-terminus, the 715-residue chain is Discoidin, CUB and LCCL domain-containing protein 1 (715 aa).

A signal peptide spans 1-34 (MVPGARGGGALARAAGRGLLALLLAVSAPLRLQA). Topologically, residues 35 to 459 (EELGDGCGHL…TSTGINITTV (425 aa)) are extracellular. Intrachain disulfides connect Cys41/Cys68 and Cys94/Cys112. A CUB domain is found at 41–150 (CGHLVTYQDS…RGFLLTYASS (110 aa)). N-linked (GlcNAc...) asparagine glycosylation is present at Asn64. The N-linked (GlcNAc...) asparagine glycan is linked to Asn124. One can recognise an LCCL domain in the interval 152–248 (HPDLITCLER…RDGSLSDKRF (97 aa)). Disulfide bonds link Cys158/Cys174 and Cys178/Cys200. Residues 248–412 (FLFTSNGCSR…IALKVELIGC (165 aa)) form the F5/8 type C domain. Residue Asn277 is glycosylated (N-linked (GlcNAc...) asparagine). Residues 278-312 (ESGDQVHWSPGQARLQDQGPSWASGDSSNNHKPRE) form a disordered region. The span at 295 to 307 (QGPSWASGDSSNN) shows a compositional bias: polar residues. Residues Asn351, Asn418, and Asn455 are each glycosylated (N-linked (GlcNAc...) asparagine). A helical transmembrane segment spans residues 460 to 480 (AIPLVLLVVLVFAGMGIFAAF). Topologically, residues 481 to 715 (RKKKKKGSPY…LNQTAMTALL (235 aa)) are cytoplasmic. The residue at position 513 (Ser513) is a Phosphoserine. Position 614 is a phosphothreonine (Thr614). Residues 619-702 (SGYRVPGPQP…SDSYSAPRDC (84 aa)) form a disordered region.

It localises to the membrane. The sequence is that of Discoidin, CUB and LCCL domain-containing protein 1 (DCBLD1) from Homo sapiens (Human).